Reading from the N-terminus, the 291-residue chain is 4-hydroxy-tetrahydrodipicolinate synthase (291 aa).

Threonine 44 is a binding site for pyruvate. Tyrosine 132 serves as the catalytic Proton donor/acceptor. The Schiff-base intermediate with substrate role is filled by lysine 160. Isoleucine 202 is a pyruvate binding site.

Belongs to the DapA family. In terms of assembly, homotetramer; dimer of dimers.

It is found in the cytoplasm. The catalysed reaction is L-aspartate 4-semialdehyde + pyruvate = (2S,4S)-4-hydroxy-2,3,4,5-tetrahydrodipicolinate + H2O + H(+). It participates in amino-acid biosynthesis; L-lysine biosynthesis via DAP pathway; (S)-tetrahydrodipicolinate from L-aspartate: step 3/4. Its function is as follows. Catalyzes the condensation of (S)-aspartate-beta-semialdehyde [(S)-ASA] and pyruvate to 4-hydroxy-tetrahydrodipicolinate (HTPA). The protein is 4-hydroxy-tetrahydrodipicolinate synthase of Sphingopyxis alaskensis (strain DSM 13593 / LMG 18877 / RB2256) (Sphingomonas alaskensis).